The primary structure comprises 216 residues: Large ribosomal subunit protein uL3 (216 aa).

The tract at residues 132-155 (QDASHGNSRSHRVPGSIGQNQTPG) is disordered. N5-methylglutamine is present on glutamine 152.

It belongs to the universal ribosomal protein uL3 family. In terms of assembly, part of the 50S ribosomal subunit. Forms a cluster with proteins L14 and L19. Methylated by PrmB.

Its function is as follows. One of the primary rRNA binding proteins, it binds directly near the 3'-end of the 23S rRNA, where it nucleates assembly of the 50S subunit. The polypeptide is Large ribosomal subunit protein uL3 (Legionella pneumophila (strain Paris)).